A 316-amino-acid polypeptide reads, in one-letter code: Fe-S cluster assembly protein DRE2 (316 aa).

Residues 7 to 139 are N-terminal SAM-like domain; sequence VSPPKRTLLL…PDYGDNEGAV (133 aa). A linker region spans residues 140–208; the sequence is TLKFGLKKKN…EDTLMTEEDL (69 aa). The [2Fe-2S] cluster site is built by C218, C229, C232, and C234. The fe-S binding site A stretch occupies residues 218–234; the sequence is CQPKAGKRRRACKDCSC. The [4Fe-4S] cluster site is built by C279, C282, C290, and C293. Short sequence motifs (cx2C motif) lie at residues 279-282 and 290-293; these read CGNC and CDGC. A fe-S binding site B region spans residues 279–293; that stretch reads CGNCSLGDAFRCDGC.

This sequence belongs to the anamorsin family. Monomer. Interacts with TAH18. Interacts with MIA40. Requires [2Fe-2S] cluster as cofactor. [4Fe-4S] cluster serves as cofactor.

The protein localises to the cytoplasm. The protein resides in the mitochondrion intermembrane space. Functionally, component of the cytosolic iron-sulfur (Fe-S) protein assembly (CIA) machinery required for the maturation of extramitochondrial Fe-S proteins. Part of an electron transfer chain functioning in an early step of cytosolic Fe-S biogenesis, facilitating the de novo assembly of a [4Fe-4S] cluster on the scaffold complex CFD1-NBP35. Electrons are transferred to DRE2 from NADPH via the FAD- and FMN-containing protein TAH18. TAH18-DRE2 are also required for the assembly of the diferric tyrosyl radical cofactor of ribonucleotide reductase (RNR), probably by providing electrons for reduction during radical cofactor maturation in the catalytic small subunit RNR2. In Fusarium vanettenii (strain ATCC MYA-4622 / CBS 123669 / FGSC 9596 / NRRL 45880 / 77-13-4) (Fusarium solani subsp. pisi), this protein is Fe-S cluster assembly protein DRE2.